Reading from the N-terminus, the 431-residue chain is Tol-Pal system protein TolB (431 aa).

Residues 1 to 18 (MKALLLSLLLLLPVVALA) form the signal peptide. The segment at 410–431 (LPLRTEKGTYQTPDWSPLPQAQ) is disordered.

Belongs to the TolB family. The Tol-Pal system is composed of five core proteins: the inner membrane proteins TolA, TolQ and TolR, the periplasmic protein TolB and the outer membrane protein Pal. They form a network linking the inner and outer membranes and the peptidoglycan layer.

The protein resides in the periplasm. Its function is as follows. Part of the Tol-Pal system, which plays a role in outer membrane invagination during cell division and is important for maintaining outer membrane integrity. This Myxococcus xanthus protein is Tol-Pal system protein TolB.